A 265-amino-acid chain; its full sequence is Indole-3-glycerol phosphate synthase (265 aa).

This sequence belongs to the TrpC family.

The catalysed reaction is 1-(2-carboxyphenylamino)-1-deoxy-D-ribulose 5-phosphate + H(+) = (1S,2R)-1-C-(indol-3-yl)glycerol 3-phosphate + CO2 + H2O. It participates in amino-acid biosynthesis; L-tryptophan biosynthesis; L-tryptophan from chorismate: step 4/5. This is Indole-3-glycerol phosphate synthase from Chromobacterium violaceum (strain ATCC 12472 / DSM 30191 / JCM 1249 / CCUG 213 / NBRC 12614 / NCIMB 9131 / NCTC 9757 / MK).